The chain runs to 307 residues: S-methyl-5'-thioadenosine phosphorylase (307 aa).

Phosphate-binding positions include serine 16, 59-60, and 92-93; these read RH and SA. Residue methionine 198 coordinates substrate. Residue serine 199 participates in phosphate binding. 222 to 224 is a substrate binding site; it reads DYD.

Belongs to the PNP/MTAP phosphorylase family. MTAP subfamily. As to quaternary structure, homotrimer.

The protein resides in the cytoplasm. The protein localises to the nucleus. It catalyses the reaction S-methyl-5'-thioadenosine + phosphate = 5-(methylsulfanyl)-alpha-D-ribose 1-phosphate + adenine. Its pathway is amino-acid biosynthesis; L-methionine biosynthesis via salvage pathway; S-methyl-5-thio-alpha-D-ribose 1-phosphate from S-methyl-5'-thioadenosine (phosphorylase route): step 1/1. Catalyzes the reversible phosphorylation of S-methyl-5'-thioadenosine (MTA) to adenine and 5-methylthioribose-1-phosphate. Involved in the breakdown of MTA, a major by-product of polyamine biosynthesis. Responsible for the first step in the methionine salvage pathway after MTA has been generated from S-adenosylmethionine. Has broad substrate specificity with 6-aminopurine nucleosides as preferred substrates. The protein is S-methyl-5'-thioadenosine phosphorylase of Schizosaccharomyces pombe (strain 972 / ATCC 24843) (Fission yeast).